The sequence spans 67 residues: DNA-directed RNA polymerase subunit omega (67 aa).

The protein belongs to the RNA polymerase subunit omega family. The RNAP catalytic core consists of 2 alpha, 1 beta, 1 beta' and 1 omega subunit. When a sigma factor is associated with the core the holoenzyme is formed, which can initiate transcription.

The enzyme catalyses RNA(n) + a ribonucleoside 5'-triphosphate = RNA(n+1) + diphosphate. Its function is as follows. Promotes RNA polymerase assembly. Latches the N- and C-terminal regions of the beta' subunit thereby facilitating its interaction with the beta and alpha subunits. This chain is DNA-directed RNA polymerase subunit omega, found in Polynucleobacter asymbioticus (strain DSM 18221 / CIP 109841 / QLW-P1DMWA-1) (Polynucleobacter necessarius subsp. asymbioticus).